The primary structure comprises 96 residues: Small, acid-soluble spore protein gamma-type (96 aa).

The segment covering 1-15 has biased composition (polar residues); that stretch reads MNTKNFTPQESRTNA. Residues 1-96 form a disordered region; that stretch reads MNTKNFTPQE…SEAKKRNNQQ (96 aa). Residues 16-27 show a composition bias toward low complexity; sequence QQVRQQNQQSAQ. The span at 28 to 41 shows a compositional bias: polar residues; it reads GTSSGFATEFASET. 2 consecutive repeats follow at residues 28–52 and 61–87; these read GTSSGFATEFASETNAQQVRQQNQQ and GATAGGFNTEFASETNVQQVRQQNQQS. Low complexity-rich tracts occupy residues 42–57 and 76–86; these read NAQQVRQQNQQSAQAN and NVQQVRQQNQQ.

Belongs to the gamma-type SASP family.

Functionally, SASP are proteins degraded in the first minutes of spore germination and provide amino acids for both new protein synthesis and metabolism. These proteins may be involved in dormant spore's high resistance to UV light. This Laceyella sacchari (Thermoactinomyces thalpophilus) protein is Small, acid-soluble spore protein gamma-type.